Here is a 424-residue protein sequence, read N- to C-terminus: 26S proteasome regulatory subunit 4 homolog (424 aa).

Positions 1–11 are enriched in basic and acidic residues; sequence MSRDKSERDNL. Positions 1–33 are disordered; the sequence is MSRDKSERDNLQDTTTINLRRRRRVKEGKAASK. 210–217 contributes to the ATP binding site; the sequence is GLPGTGKT.

The protein belongs to the AAA ATPase family. As to quaternary structure, the 26S proteasome consists of a 20S proteasome core and two 19S regulatory subunits. The 20S proteasome core is composed of 28 subunits that are arranged in four stacked rings, resulting in a barrel-shaped structure. The two end rings are each formed by seven alpha subunits, and the two central rings are each formed by seven beta subunits. The catalytic chamber with the active sites is on the inside of the barrel.

It is found in the cytoplasm. The protein resides in the nucleus. Acts as a regulatory subunit of the 26S proteasome which degrades poly-ubiquitinated proteins in the cytoplasm and in the nucleus. It is essential for the regulated turnover of proteins and for the removal of misfolded proteins. The proteasome is a multicatalytic proteinase complex that is characterized by its ability to cleave peptides with Arg, Phe, Tyr, Leu, and Glu adjacent to the leaving group at neutral or slightly basic pH. The sequence is that of 26S proteasome regulatory subunit 4 homolog (RPT2) from Encephalitozoon cuniculi (strain GB-M1) (Microsporidian parasite).